The primary structure comprises 1109 residues: DNA-directed RNA polymerase subunit beta (1109 aa).

It belongs to the RNA polymerase beta chain family. In terms of assembly, in plastids the minimal PEP RNA polymerase catalytic core is composed of four subunits: alpha, beta, beta', and beta''. When a (nuclear-encoded) sigma factor is associated with the core the holoenzyme is formed, which can initiate transcription.

It localises to the plastid. The protein localises to the chloroplast. The enzyme catalyses RNA(n) + a ribonucleoside 5'-triphosphate = RNA(n+1) + diphosphate. DNA-dependent RNA polymerase catalyzes the transcription of DNA into RNA using the four ribonucleoside triphosphates as substrates. The protein is DNA-directed RNA polymerase subunit beta of Nephroselmis olivacea (Green alga).